The chain runs to 578 residues: Isocitrate dehydrogenase kinase/phosphatase (578 aa).

ATP is bound by residues 315–321 (APGIRGM) and K336. The active site involves D371.

It belongs to the AceK family.

It is found in the cytoplasm. The catalysed reaction is L-seryl-[isocitrate dehydrogenase] + ATP = O-phospho-L-seryl-[isocitrate dehydrogenase] + ADP + H(+). Its function is as follows. Bifunctional enzyme which can phosphorylate or dephosphorylate isocitrate dehydrogenase (IDH) on a specific serine residue. This is a regulatory mechanism which enables bacteria to bypass the Krebs cycle via the glyoxylate shunt in response to the source of carbon. When bacteria are grown on glucose, IDH is fully active and unphosphorylated, but when grown on acetate or ethanol, the activity of IDH declines drastically concomitant with its phosphorylation. In Escherichia coli (strain K12 / MC4100 / BW2952), this protein is Isocitrate dehydrogenase kinase/phosphatase.